Consider the following 273-residue polypeptide: Large ribosomal subunit protein uL2 (273 aa).

2 disordered regions span residues 28–53 (KPFA…TTRH) and 221–273 (RGTA…RRSK). The segment covering 39–48 (KSGGRNNNGR) has biased composition (low complexity).

It belongs to the universal ribosomal protein uL2 family. Part of the 50S ribosomal subunit. Forms a bridge to the 30S subunit in the 70S ribosome.

Functionally, one of the primary rRNA binding proteins. Required for association of the 30S and 50S subunits to form the 70S ribosome, for tRNA binding and peptide bond formation. It has been suggested to have peptidyltransferase activity; this is somewhat controversial. Makes several contacts with the 16S rRNA in the 70S ribosome. In Salmonella agona (strain SL483), this protein is Large ribosomal subunit protein uL2.